An 89-amino-acid chain; its full sequence is Small ribosomal subunit protein uS15 (89 aa).

Belongs to the universal ribosomal protein uS15 family. In terms of assembly, part of the 30S ribosomal subunit. Forms a bridge to the 50S subunit in the 70S ribosome, contacting the 23S rRNA.

In terms of biological role, one of the primary rRNA binding proteins, it binds directly to 16S rRNA where it helps nucleate assembly of the platform of the 30S subunit by binding and bridging several RNA helices of the 16S rRNA. Its function is as follows. Forms an intersubunit bridge (bridge B4) with the 23S rRNA of the 50S subunit in the ribosome. This chain is Small ribosomal subunit protein uS15, found in Orientia tsutsugamushi (strain Ikeda) (Rickettsia tsutsugamushi).